Consider the following 1092-residue polypeptide: DNA polymerase delta catalytic subunit (1092 aa).

The segment at 1–71 (MDGKRKFNGT…SRPPPPELDP (71 aa)) is disordered. The short motif at 4–19 (KRKFNGTSNGHAKKPR) is the Nuclear localization signal element. Cysteine 997, cysteine 1000, cysteine 1014, and cysteine 1017 together coordinate Zn(2+). A CysA-type zinc finger spans residues 997–1017 (CLGCKSLMPKGYEQACLCPHC). [4Fe-4S] cluster contacts are provided by cysteine 1046, cysteine 1049, cysteine 1059, and cysteine 1064. Positions 1046 to 1064 (CQRCQESLHEEVICSNRDC) match the CysB motif motif.

It belongs to the DNA polymerase type-B family. Catalytic component of the DNA polymerase delta complex consisting of three subunits: the catalytic subunit PolD1 and two accessory subunits PolD2/Pol31 and PolD3/Pol32. Within the delta complex, interacts with both PolD2 and PolD3, and is able to interact with PolD2 in the absence of PolD3. Interacts with PCNA and PCNA2. The cofactor is [4Fe-4S] cluster. It depends on Mg(2+) as a cofactor. Expressed in ovaries (at the protein level). Expressed in embryos (at the protein level).

Its subcellular location is the nucleus. The protein resides in the nucleoplasm. It carries out the reaction DNA(n) + a 2'-deoxyribonucleoside 5'-triphosphate = DNA(n+1) + diphosphate. Its activity is regulated as follows. Inhibited by KCL. Also inhibited by carbonyldiphosphonate, aphidicolin and N-ethylmaleimide (NEM). Its function is as follows. As the catalytic component of the DNA polymerase delta complex, plays a crucial role in high fidelity genome replication, including lagging strand synthesis, DNA recombination and repair. Exhibits both DNA polymerase and 3'- to 5'-exonuclease activities. Required at the nucleus of rapidly dividing embryonic cells to activate genome replication during the earliest cell cycles. Likely to require the presence of accessory proteins PolD2 and PolD3 for full activity. The sequence is that of DNA polymerase delta catalytic subunit from Drosophila melanogaster (Fruit fly).